Reading from the N-terminus, the 791-residue chain is MRLSEAWLRQYVNPMVDTAGLVRQLTMAGLEVDGAEPAAADFSGVVVARILEAAPHPEADRLQICRVDTGGGEPLQIVCGAANARAGLVAPLAMEGAVLPGPLKIKRSRLRGVESFGMLCSAKELGLEDDASGLLELPADAPVGADIRDYLQLDDRILEIDLTPNRADCLSVEGIAREVALINRLPFRGVDAGTVAVGSQRRLVVHLDAPEACPRYLGRVITGIDARAQTPRWMKERLRRSGLRSLGPAVDVTNYVLLELGQPLHAFDLERLSGDVHVRQARDGELLRLLNGEEITLSSDVLVIADEEKALALAGIMGGEQSAVGGATSDVFLECAFFAPALIMGKARRYGLATDSSHRFERGVDPSLQRRAIERATALLLEIAGGEAGPVTEAVREDLLPLRAPVRLREQRIGQLLGLNLPRDEVADILARLGMSVEEDEPGWTVTPPSFRFDIALEADLIEEIGRVYGYDAIPRRRPAVASAMQPASETVLGLDRVKDLLADRGYQEVITYSFVSAEMQRRIDPEAEPEALLNPISADLAVMRISLWTGLLDCAQKNLSRQQDRVRIFETGLKFVRRDGSLEQRNTLAGLVLGSILDEQWGEKSRRVDFFDVKSDVEAILGLTGKSSVRFRPAIHHALHPGQSAEILIGDGGAGWLGMLHPQIERELGFEQPVFMFELDAGALLQRDLPRFAPLSRFPLVRRDLALVVARDLPAADLLEAVAASGGPLVRDTVLFDVYSGAGVEAGKKSVALGVTLQDAEETLTDDRVDEVMSRIVARLAADFGAKLRE.

The 110-residue stretch at A39–R148 folds into the tRNA-binding domain. The 76-residue stretch at P401 to R476 folds into the B5 domain. Residues D454, D460, E463, and E464 each coordinate Mg(2+). The 94-residue stretch at S697–R790 folds into the FDX-ACB domain.

The protein belongs to the phenylalanyl-tRNA synthetase beta subunit family. Type 1 subfamily. As to quaternary structure, tetramer of two alpha and two beta subunits. Mg(2+) serves as cofactor.

The protein localises to the cytoplasm. It carries out the reaction tRNA(Phe) + L-phenylalanine + ATP = L-phenylalanyl-tRNA(Phe) + AMP + diphosphate + H(+). The protein is Phenylalanine--tRNA ligase beta subunit of Methylococcus capsulatus (strain ATCC 33009 / NCIMB 11132 / Bath).